We begin with the raw amino-acid sequence, 708 residues long: Killer toxin KHS (708 aa).

An N-terminal signal peptide occupies residues 1-27 (MPRFAIIFALLIAYSLFLSTLFTGSIP). A propeptide spanning residues 28-36 (DRANTVTSN) is cleaved from the precursor. 3 consecutive transmembrane segments (helical) span residues 77–97 (VCTI…AVLV), 380–400 (IMMK…IYVI), and 466–486 (NIIY…VIVH).

The protein to yeast YER187w. In terms of assembly, monomer.

It localises to the cell membrane. Functionally, kills sensitive strains of yeast. The polypeptide is Killer toxin KHS (KHS1) (Saccharomyces cerevisiae (Baker's yeast)).